The following is a 688-amino-acid chain: Polyribonucleotide nucleotidyltransferase (688 aa).

Mg(2+)-binding residues include Asp484 and Asp490. The 60-residue stretch at 550-609 (PTTEIFNVAPDKIVEIIGQGGRVIKEIVEKFEVKIDLNKPSGEVKIMGNKERVLKTKEFI) folds into the KH domain. Positions 626–688 (DEVLEAQVKR…NKGKIALDLA (63 aa)) constitute an S1 motif domain.

This sequence belongs to the polyribonucleotide nucleotidyltransferase family. Mg(2+) is required as a cofactor.

Its subcellular location is the cytoplasm. The catalysed reaction is RNA(n+1) + phosphate = RNA(n) + a ribonucleoside 5'-diphosphate. In terms of biological role, involved in mRNA degradation. Catalyzes the phosphorolysis of single-stranded polyribonucleotides processively in the 3'- to 5'-direction. The polypeptide is Polyribonucleotide nucleotidyltransferase (Helicobacter pylori (strain G27)).